Here is a 113-residue protein sequence, read N- to C-terminus: Ig heavy chain V-III region T957 (113 aa).

An Ig-like domain is found at 1-113 (EVKLEESGGG…YWGQGTLVTV (113 aa)). The cysteines at positions 22 and 98 are disulfide-linked.

This Mus musculus (Mouse) protein is Ig heavy chain V-III region T957.